Reading from the N-terminus, the 363-residue chain is S-adenosylmethionine:tRNA ribosyltransferase-isomerase (363 aa).

The protein belongs to the QueA family. In terms of assembly, monomer.

It is found in the cytoplasm. The enzyme catalyses 7-aminomethyl-7-carbaguanosine(34) in tRNA + S-adenosyl-L-methionine = epoxyqueuosine(34) in tRNA + adenine + L-methionine + 2 H(+). The protein operates within tRNA modification; tRNA-queuosine biosynthesis. Its function is as follows. Transfers and isomerizes the ribose moiety from AdoMet to the 7-aminomethyl group of 7-deazaguanine (preQ1-tRNA) to give epoxyqueuosine (oQ-tRNA). The polypeptide is S-adenosylmethionine:tRNA ribosyltransferase-isomerase (Synechococcus sp. (strain RCC307)).